The primary structure comprises 448 residues: B-cell lymphoma 3 protein homolog (448 aa).

The disordered stretch occupies residues Met-1 to Ala-54. A Phosphoserine modification is found at Ser-39. ANK repeat units follow at residues Asp-129–Asp-161, Leu-166–Ala-195, His-199–Val-228, Glu-236–Ala-265, Ser-270–Ala-299, Ser-303–Leu-332, and Lys-333–Ser-362. The segment at Lys-356–Ser-448 is disordered. The span at Ala-361–Asn-376 shows a compositional bias: polar residues. Ser-369 carries the phosphoserine modification. Over residues Ser-377–Ser-398 the composition is skewed to low complexity. A phosphoserine; by GSK3 mark is found at Ser-396 and Ser-400. The segment covering Thr-411–Pro-423 has biased composition (polar residues). The segment covering Phe-425 to Gly-436 has biased composition (low complexity). Positions Arg-437 to Ser-448 are enriched in pro residues.

As to quaternary structure, component of a complex consisting of the NF-kappa-B p52-p52 homodimer and BCL3. Component of a complex consisting of the NF-kappa-B p50-p50 homodimer and BCL3. Interacts with N4BP2, COPS5 and PIR. Interacts with CYLD. In terms of processing, polyubiquitinated. Ubiquitination via 'Lys-63'-linked ubiquitin chains is required for nuclear accumulation. Deubiquitinated by CYLD, which acts on 'Lys-63'-linked ubiquitin chains. Deubiquitination by CYLD prevents nuclear accumulation. Activated by phosphorylation.

It localises to the nucleus. The protein localises to the cytoplasm. The protein resides in the perinuclear region. Contributes to the regulation of transcriptional activation of NF-kappa-B target genes. In the cytoplasm, inhibits the nuclear translocation of the NF-kappa-B p50 subunit. In the nucleus, acts as a transcriptional activator that promotes transcription of NF-kappa-B target genes. Contributes to the regulation of cell proliferation. The polypeptide is B-cell lymphoma 3 protein homolog (Bcl3) (Mus musculus (Mouse)).